A 334-amino-acid chain; its full sequence is MSKKNITIIGTGAYGTALANVLADNDNNVIMYGIVEQQVDDINIYHQNSVFFDNKKINKTIRATNSMAAALENTDILILGVPTAAIKHVVNDIIKYAKKPMDIINTAKGLDEENLGLLSDKIKKYFEGSNVISTYSALYGPSIAIEVVDRQPTAIMIASETIEKAKELCNVFSNEYFYMYPTTDIAGCEISAALKNAIAIGGGILKAYNAGDNAHATLLTLGLNEMYEFGKHFGAKLETFLNFAGLGDLILTASSKKSRNFRLGERIVELNDAKKALESFNLTVEGVETARIAHEIGVKYQISMNFFEIIYNILYNNVKPISLLNNVFRDVKLV.

Tyr-14 and Lys-108 together coordinate NADPH. Lys-108, Gly-140, and Ser-142 together coordinate sn-glycerol 3-phosphate. Residue Ala-144 participates in NADPH binding. Sn-glycerol 3-phosphate contacts are provided by Lys-195, Asp-248, Ser-258, Arg-259, and Asn-260. Lys-195 acts as the Proton acceptor in catalysis. Arg-259 provides a ligand contact to NADPH. Glu-285 contacts NADPH.

This sequence belongs to the NAD-dependent glycerol-3-phosphate dehydrogenase family.

It localises to the cytoplasm. The catalysed reaction is sn-glycerol 3-phosphate + NAD(+) = dihydroxyacetone phosphate + NADH + H(+). It carries out the reaction sn-glycerol 3-phosphate + NADP(+) = dihydroxyacetone phosphate + NADPH + H(+). It functions in the pathway membrane lipid metabolism; glycerophospholipid metabolism. Its function is as follows. Catalyzes the reduction of the glycolytic intermediate dihydroxyacetone phosphate (DHAP) to sn-glycerol 3-phosphate (G3P), the key precursor for phospholipid synthesis. In Mesoplasma florum (strain ATCC 33453 / NBRC 100688 / NCTC 11704 / L1) (Acholeplasma florum), this protein is Glycerol-3-phosphate dehydrogenase [NAD(P)+].